The sequence spans 351 residues: Dihydroorotate dehydrogenase (quinone) (351 aa).

Residues 61–65 and T85 each bind FMN; that span reads AGLDK. Position 65 (K65) interacts with substrate. Position 110 to 114 (110 to 114) interacts with substrate; it reads NRMGF. The FMN site is built by N139 and N172. Residue N172 coordinates substrate. S175 serves as the catalytic Nucleophile. Residue N177 participates in substrate binding. Residues K217 and T245 each contribute to the FMN site. 246-247 is a substrate binding site; it reads NT. Residues G268, G297, and 318–319 contribute to the FMN site; that span reads YS.

Belongs to the dihydroorotate dehydrogenase family. Type 2 subfamily. Monomer. FMN serves as cofactor.

It localises to the cell membrane. It catalyses the reaction (S)-dihydroorotate + a quinone = orotate + a quinol. It participates in pyrimidine metabolism; UMP biosynthesis via de novo pathway; orotate from (S)-dihydroorotate (quinone route): step 1/1. Its function is as follows. Catalyzes the conversion of dihydroorotate to orotate with quinone as electron acceptor. This Xanthomonas oryzae pv. oryzae (strain PXO99A) protein is Dihydroorotate dehydrogenase (quinone).